The chain runs to 114 residues: Nascent polypeptide-associated complex protein (114 aa).

The 65-residue stretch at 5–69 (PSQFKNLERM…AKEAQKEEPK (65 aa)) folds into the NAC-A/B domain.

The protein belongs to the NAC-alpha family. As to quaternary structure, homodimer. Interacts with the ribosome. Binds ribosomal RNA.

In terms of biological role, contacts the emerging nascent chain on the ribosome. The protein is Nascent polypeptide-associated complex protein of Sulfurisphaera tokodaii (strain DSM 16993 / JCM 10545 / NBRC 100140 / 7) (Sulfolobus tokodaii).